Reading from the N-terminus, the 197-residue chain is Adenylate kinase (197 aa).

An ATP-binding site is contributed by 19–24 (GSGKGT). Positions 39-68 (SSGDLLRAEVQSGSPKGKELKAMMERGELV) are NMP. AMP contacts are provided by residues Ser-40, Arg-45, 66-68 (ELV), 95-98 (RYPR), and Gln-102. The interval 132-142 (KRAETSNRVDD) is LID. Arg-133 provides a ligand contact to ATP. AMP is bound by residues Arg-139 and Arg-150. Gly-178 contacts ATP.

Belongs to the adenylate kinase family. Monomer.

The protein resides in the cytoplasm. The catalysed reaction is AMP + ATP = 2 ADP. Catalyzes the reversible transfer of the terminal phosphate group between ATP and AMP. Plays an important role in cellular energy homeostasis and in adenine nucleotide metabolism. The chain is Adenylate kinase from Schistosoma mansoni (Blood fluke).